The sequence spans 86 residues: MKVSVVITLAVLGVMFVWASAAELKERGSDQRDSPAWIKSMERIFQSEERECTKFLGGCSEDSECCPHLGCKDVLYYCAWDGTFGK.

The signal sequence occupies residues 1 to 21 (MKVSVVITLAVLGVMFVWASA). Residues 22–50 (AELKERGSDQRDSPAWIKSMERIFQSEER) constitute a propeptide that is removed on maturation. Intrachain disulfides connect Cys52-Cys66, Cys59-Cys71, and Cys65-Cys78. Position 84 is a phenylalanine amide (Phe84).

It belongs to the neurotoxin 10 (Hwtx-1) family. 37 (Jztx-31) subfamily. As to expression, expressed by the venom gland.

It is found in the secreted. In terms of biological role, inhibits both peak current and fast inactivation of voltage-gated sodium channels (Nav) channels. Inhibits the inactivation of Nav on DRG neurons (EC(50)=1.77 uM) and peak current of cardiac myocytes (IC(50)=0.90 uM). In Chilobrachys guangxiensis (Chinese earth tiger tarantula), this protein is Mu-theraphotoxin-Cg2a 3.